The sequence spans 117 residues: Ribonuclease P protein component (117 aa).

This sequence belongs to the RnpA family. Consists of a catalytic RNA component (M1 or rnpB) and a protein subunit.

It carries out the reaction Endonucleolytic cleavage of RNA, removing 5'-extranucleotides from tRNA precursor.. Its function is as follows. RNaseP catalyzes the removal of the 5'-leader sequence from pre-tRNA to produce the mature 5'-terminus. It can also cleave other RNA substrates such as 4.5S RNA. The protein component plays an auxiliary but essential role in vivo by binding to the 5'-leader sequence and broadening the substrate specificity of the ribozyme. This is Ribonuclease P protein component from Aliivibrio salmonicida (strain LFI1238) (Vibrio salmonicida (strain LFI1238)).